Here is a 436-residue protein sequence, read N- to C-terminus: Adenylosuccinate synthetase (436 aa).

Residues 12–18 (GDEGKGK) and 40–42 (GHT) each bind GTP. Asp13 (proton acceptor) is an active-site residue. Asp13 and Gly40 together coordinate Mg(2+). Residues 13–16 (DEGK), 38–41 (NAGH), Thr130, Arg144, Gln230, Thr245, and Arg309 each bind IMP. The active-site Proton donor is the His41. Residue 305–311 (TTTGRPR) coordinates substrate. GTP-binding positions include Arg311, 337–339 (KLD), and 419–421 (SVG).

It belongs to the adenylosuccinate synthetase family. Homodimer. It depends on Mg(2+) as a cofactor.

Its subcellular location is the cytoplasm. It catalyses the reaction IMP + L-aspartate + GTP = N(6)-(1,2-dicarboxyethyl)-AMP + GDP + phosphate + 2 H(+). The protein operates within purine metabolism; AMP biosynthesis via de novo pathway; AMP from IMP: step 1/2. In terms of biological role, plays an important role in the de novo pathway of purine nucleotide biosynthesis. Catalyzes the first committed step in the biosynthesis of AMP from IMP. This chain is Adenylosuccinate synthetase, found in Myxococcus xanthus (strain DK1622).